Reading from the N-terminus, the 217-residue chain is PTB-containing, cubilin and LRP1-interacting protein (217 aa).

The PID domain maps to 60–217 (VTYLGKVSTT…ASQELESDDG (158 aa)). A disordered region spans residues 194–217 (KSDGRIHRSSSSEEASQELESDDG). Residues S202, S203, and S214 each carry the phosphoserine modification. A compositionally biased stretch (acidic residues) spans 208–217 (ASQELESDDG).

In terms of assembly, found in a complex with PID1/PCLI1, LRP1 and CUBNI. Interacts with LRP1 and CUBN.

The protein localises to the cytoplasm. In terms of biological role, increases proliferation of preadipocytes without affecting adipocytic differentiation. This Mus musculus (Mouse) protein is PTB-containing, cubilin and LRP1-interacting protein (Pid1).